The sequence spans 268 residues: Phosphate import ATP-binding protein PstB 3 (268 aa).

One can recognise an ABC transporter domain in the interval 15–254 (LRTENLNVYY…DATESIFNNP (240 aa)). 47 to 54 (GPSGCGKS) contacts ATP.

Belongs to the ABC transporter superfamily. Phosphate importer (TC 3.A.1.7) family. The complex is composed of two ATP-binding proteins (PstB), two transmembrane proteins (PstC and PstA) and a solute-binding protein (PstS).

It is found in the cell inner membrane. The enzyme catalyses phosphate(out) + ATP + H2O = ADP + 2 phosphate(in) + H(+). Its function is as follows. Part of the ABC transporter complex PstSACB involved in phosphate import. Responsible for energy coupling to the transport system. The chain is Phosphate import ATP-binding protein PstB 3 from Nostoc sp. (strain PCC 7120 / SAG 25.82 / UTEX 2576).